Consider the following 110-residue polypeptide: Protein NATD1 (110 aa).

Positions 19-109 (EHDRQRRQFS…PLPQYLERLQ (91 aa)) constitute an N-acetyltransferase domain.

Belongs to the NATD1 family. In terms of tissue distribution, expressed in the heart, testis, kidney and lung.

In Mus musculus (Mouse), this protein is Protein NATD1 (Natd1).